The sequence spans 128 residues: Holo-[acyl-carrier-protein] synthase (128 aa).

Positions 8 and 58 each coordinate Mg(2+).

It belongs to the P-Pant transferase superfamily. AcpS family. Requires Mg(2+) as cofactor.

It localises to the cytoplasm. It carries out the reaction apo-[ACP] + CoA = holo-[ACP] + adenosine 3',5'-bisphosphate + H(+). Transfers the 4'-phosphopantetheine moiety from coenzyme A to a Ser of acyl-carrier-protein. This chain is Holo-[acyl-carrier-protein] synthase, found in Exiguobacterium sibiricum (strain DSM 17290 / CCUG 55495 / CIP 109462 / JCM 13490 / 255-15).